We begin with the raw amino-acid sequence, 508 residues long: Citrate lyase alpha chain (508 aa).

As to quaternary structure, oligomer with a subunit composition of (alpha,beta,gamma)6.

Its subcellular location is the cytoplasm. The enzyme catalyses citrate = oxaloacetate + acetate. The catalysed reaction is citrate + acetyl-CoA = (3S)-citryl-CoA + acetate. In terms of biological role, represents a citrate:acetyl-ACP transferase. In Klebsiella pneumoniae, this protein is Citrate lyase alpha chain (citF).